The primary structure comprises 212 residues: Ribosomal RNA small subunit methyltransferase G (212 aa).

Residues glycine 73, phenylalanine 78, 96–98, 124–125, and arginine 141 contribute to the S-adenosyl-L-methionine site; these read ESS and VE.

Belongs to the methyltransferase superfamily. RNA methyltransferase RsmG family.

Its subcellular location is the cytoplasm. Functionally, specifically methylates the N7 position of a guanine in 16S rRNA. The sequence is that of Ribosomal RNA small subunit methyltransferase G from Aster yellows witches'-broom phytoplasma (strain AYWB).